A 392-amino-acid polypeptide reads, in one-letter code: Norsolorinic acid reductase B (392 aa).

Asp75 lines the NADP(+) pocket. Tyr80 serves as the catalytic Proton donor. Residues 184–185 (SD), Gln210, 239–249 (GTLGQGSFQTE), and 311–319 (RKLEHIQGN) each bind NADP(+). A disordered region spans residues 242–263 (GQGSFQTEEGRKQREKDNPGRK). A compositionally biased stretch (basic and acidic residues) spans 249-261 (EEGRKQREKDNPG).

The protein belongs to the aldo/keto reductase family. Aldo/keto reductase 2 subfamily.

Its pathway is mycotoxin biosynthesis. Its function is as follows. Norsolorinic acid reductase; part of the fragmented gene cluster that mediates the biosynthesis of dothistromin (DOTH), a polyketide toxin very similar in structure to the aflatoxin precursor, versicolorin B. The first step of the pathway is the conversion of acetate to norsolorinic acid (NOR) and requires the fatty acid synthase subunits hexA and hexB, as well as the polyketide synthase pksA. PksA combines a hexanoyl starter unit and 7 malonyl-CoA extender units to synthesize the precursor NOR. The hexanoyl starter unit is provided to the acyl-carrier protein (ACP) domain by the fungal fatty acid synthase hexA/hexB. The second step is the conversion of NOR to averantin (AVN) and requires the norsolorinic acid ketoreductase nor1, which catalyzes the dehydration of norsolorinic acid to form (1'S)-averantin. The cytochrome P450 monooxygenase avnA then catalyzes the hydroxylation of AVN to 5'hydroxyaverantin (HAVN). The next step is performed by adhA that transforms HAVN to averufin (AVF). Averufin might then be converted to hydroxyversicolorone by cypX and avfA. Hydroxyversicolorone is further converted versiconal hemiacetal acetate (VHA) by moxY. VHA is then the substrate for the versiconal hemiacetal acetate esterase est1 to yield versiconal (VAL). Versicolorin B synthase vbsA then converts VAL to versicolorin B (VERB) by closing the bisfuran ring. Then, the activity of the versicolorin B desaturase verB leads to versicolorin A (VERA). DotB, a predicted chloroperoxidase, may perform epoxidation of the A-ring of VERA. Alternatively, a cytochrome P450, such as cypX or avnA could catalyze this step. It is also possible that another, uncharacterized, cytochrome P450 enzyme is responsible for this step. Opening of the epoxide could potentially be achieved by the epoxide hydrolase epoA. However, epoA seems not to be required for DOTH biosynthesis, but other epoxide hydrolases may have the ability to complement this hydrolysis. Alternatively, opening of the epoxide ring could be achieved non-enzymatically. The next step is the deoxygenation of ring A to yield the 5,8-dihydroxyanthraquinone which is most likely catalyzed by the NADPH dehydrogenase encoded by ver1. The last stages of DOTH biosynthesis are proposed to involve hydroxylation of the bisfuran. OrdB and norB might have oxidative roles here. An alternative possibility is that cytochrome P450 monoogenases such as avnA and cypX might perform these steps in addition to previously proposed steps. The sequence is that of Norsolorinic acid reductase B from Dothistroma septosporum (strain NZE10 / CBS 128990) (Red band needle blight fungus).